The primary structure comprises 319 residues: Cell surface A33 antigen (319 aa).

An N-terminal signal peptide occupies residues 1–21; sequence MVGKMWPVLWTLCAVRVTVDA. The Ig-like V-type domain occupies 22 to 134; that stretch reads ISVETPQDVL…LEGNTKSRVR (113 aa). Residues 22–235 lie on the Extracellular side of the membrane; it reads ISVETPQDVL…VAVRSPSMNV (214 aa). 3 disulfide bridges follow: Cys-43–Cys-117, Cys-146–Cys-222, and Cys-162–Cys-211. Asn-112, Asn-200, and Asn-223 each carry an N-linked (GlcNAc...) asparagine glycan. An Ig-like C2-type domain is found at 140–227; the sequence is PPSKPECGIE…GTQFCNITVA (88 aa). Residues 236–256 traverse the membrane as a helical segment; the sequence is ALYVGIAVGVVAALIIIGIII. Residues 257 to 319 are Cytoplasmic-facing; it reads YCCCCRGKDD…GRESPDHLDQ (63 aa). 2 stretches are compositionally biased toward basic and acidic residues: residues 267-295 and 303-319; these read NTEDKEDARPNREAYEEPPEQLRELSRER and QEEQRSTGRESPDHLDQ. Positions 267–319 are disordered; sequence NTEDKEDARPNREAYEEPPEQLRELSREREEEDDYRQEEQRSTGRESPDHLDQ.

In terms of processing, N-glycosylated, contains approximately 8 kDa of N-linked carbohydrate. Palmitoylated. Expressed in normal gastrointestinal epithelium and in 95% of colon cancers.

It is found in the membrane. Functionally, may play a role in cell-cell recognition and signaling. In Homo sapiens (Human), this protein is Cell surface A33 antigen (GPA33).